The following is a 343-amino-acid chain: L-threonine 3-dehydrogenase (343 aa).

Cys-39 lines the Zn(2+) pocket. Catalysis depends on charge relay system residues Thr-41 and His-44. The Zn(2+) site is built by His-64, Glu-65, Cys-94, Cys-97, Cys-100, and Cys-108. Residues Ile-176, Asp-196, Arg-201, 263–265, and 287–288 each bind NAD(+); these read LGI and IY.

Belongs to the zinc-containing alcohol dehydrogenase family. In terms of assembly, homotetramer. It depends on Zn(2+) as a cofactor.

It localises to the cytoplasm. The enzyme catalyses L-threonine + NAD(+) = (2S)-2-amino-3-oxobutanoate + NADH + H(+). It functions in the pathway amino-acid degradation; L-threonine degradation via oxydo-reductase pathway; glycine from L-threonine: step 1/2. In terms of biological role, catalyzes the NAD(+)-dependent oxidation of L-threonine to 2-amino-3-ketobutyrate. In Anaeromyxobacter sp. (strain Fw109-5), this protein is L-threonine 3-dehydrogenase.